The following is a 318-amino-acid chain: Ubiquitin-like domain-containing CTD phosphatase 1 (318 aa).

One can recognise a Ubiquitin-like domain in the interval 3–81 (VSVIIKWGGQ…IMMMGTREES (79 aa)). The 162-residue stretch at 133–294 (PRPGKRLLVL…YKLSQYLKEI (162 aa)) folds into the FCP1 homology domain. 3 residues coordinate Mg(2+): Asp-143, Asp-145, and Asp-253.

Mg(2+) serves as cofactor.

It localises to the nucleus. The catalysed reaction is O-phospho-L-seryl-[protein] + H2O = L-seryl-[protein] + phosphate. It carries out the reaction O-phospho-L-threonyl-[protein] + H2O = L-threonyl-[protein] + phosphate. Its function is as follows. Dephosphorylates 26S nuclear proteasomes, thereby decreasing their proteolytic activity. Recruited to the 19S regulatory particle of the 26S proteasome where it dephosphorylates 19S component psmc2 which impairs psmc2 ATPase activity and disrupts 26S proteasome assembly. Has also been reported to stimulate the proteolytic activity of the 26S proteasome. The chain is Ubiquitin-like domain-containing CTD phosphatase 1 (ublcp1) from Danio rerio (Zebrafish).